The primary structure comprises 75 residues: Large ribosomal subunit protein bL31 (75 aa).

Zn(2+) contacts are provided by C16, C18, C38, and C41.

Belongs to the bacterial ribosomal protein bL31 family. Type A subfamily. As to quaternary structure, part of the 50S ribosomal subunit. Zn(2+) is required as a cofactor.

Binds the 23S rRNA. The chain is Large ribosomal subunit protein bL31 from Mycolicibacterium smegmatis (strain ATCC 700084 / mc(2)155) (Mycobacterium smegmatis).